The chain runs to 607 residues: Elongation factor 4 (607 aa).

Positions 11-193 (ENIRNFSIIA…KIVEVVPPPE (183 aa)) constitute a tr-type G domain. GTP is bound by residues 23–28 (DHGKST) and 140–143 (NKID).

Belongs to the TRAFAC class translation factor GTPase superfamily. Classic translation factor GTPase family. LepA subfamily.

It is found in the cell membrane. The catalysed reaction is GTP + H2O = GDP + phosphate + H(+). In terms of biological role, required for accurate and efficient protein synthesis under certain stress conditions. May act as a fidelity factor of the translation reaction, by catalyzing a one-codon backward translocation of tRNAs on improperly translocated ribosomes. Back-translocation proceeds from a post-translocation (POST) complex to a pre-translocation (PRE) complex, thus giving elongation factor G a second chance to translocate the tRNAs correctly. Binds to ribosomes in a GTP-dependent manner. This chain is Elongation factor 4, found in Staphylococcus haemolyticus (strain JCSC1435).